The chain runs to 250 residues: MSKPQPIAAANWKCNGSQQSLSELIDLFNSTSINHDVQCVVASTFVHLAMTKERLSHPKFVIAAQNAIAKSGAFTGEVSLPILKDFGVNWIVLGHSERRAYYGETNEIVADKVAAAVASGFMVIACIGETLQERESGRTAVVVLTQIAAIAKKLKKADWAKVVIAYEPVWAIGTGKVATPQQAQEAHALIRSWVSSKIGADVAGELRILYGGSVNGKNARTLYQQRDVNGFLVGGASLKPEFVDIIKATQ.

Substrate is bound by residues asparagine 11 and lysine 13. Histidine 95 serves as the catalytic Electrophile. Glutamate 167 serves as the catalytic Proton acceptor.

This sequence belongs to the triosephosphate isomerase family. Homodimer.

It localises to the glycosome. It carries out the reaction D-glyceraldehyde 3-phosphate = dihydroxyacetone phosphate. It participates in carbohydrate biosynthesis; gluconeogenesis. It functions in the pathway carbohydrate degradation; glycolysis; D-glyceraldehyde 3-phosphate from glycerone phosphate: step 1/1. The protein is Triosephosphate isomerase, glycosomal of Trypanosoma brucei brucei.